Here is a 376-residue protein sequence, read N- to C-terminus: Alpha-2,8-sialyltransferase 8E (376 aa).

The Cytoplasmic portion of the chain corresponds to 1-17 (MRYADPSANRDLLGNRT). The chain crosses the membrane as a helical; Signal-anchor for type II membrane protein span at residues 18-38 (LLFIFICAFALVTLLQQILYG). Residues 39-376 (RNYIKRYFEF…RVHTGTCSCC (338 aa)) are Lumenal-facing. N-linked (GlcNAc...) asparagine glycosylation is found at asparagine 56 and asparagine 96. 2 disulfide bridges follow: cysteine 164–cysteine 313 and cysteine 178–cysteine 373. Substrate-binding positions include asparagine 192 and 214-216 (NPS). N-linked (GlcNAc...) asparagine glycosylation is found at asparagine 241 and asparagine 284. 300–302 (STG) is a binding site for substrate. The active-site Proton donor/acceptor is histidine 348.

Belongs to the glycosyltransferase 29 family.

The protein resides in the golgi apparatus membrane. The catalysed reaction is a ganglioside GQ1c (d18:1(4E)) + CMP-N-acetyl-beta-neuraminate = a ganglioside GP1c (d18:1(4E)) + CMP + H(+). It participates in protein modification; protein glycosylation. Its function is as follows. Involved in the synthesis of gangliosides GD1c, GT1a, GQ1b, GP1c and GT3 from GD1a, GT1b, GM1b and GD3 respectively. The chain is Alpha-2,8-sialyltransferase 8E (ST8SIA5) from Pan troglodytes (Chimpanzee).